A 194-amino-acid polypeptide reads, in one-letter code: MVMHFFLLFVSNILINNFILVRFLGLCPFMGISRTIDSAIGMGLATTCVIVFVSIISWLINFYILIPFHLIHLCTMTYMLIIAVSVQIFEIIVKKVSSTLYRLLGIYLPLITTNCSVLAIPLMNTKLNSNFIESVLYGFSSSLGFFLVLVIFSSIRERISESDVPMYFRGYPIALITASLLAIAFMGFDGLIKF.

Transmembrane regions (helical) follow at residues 1-21, 48-68, 73-93, 103-123, 135-155, and 172-192; these read MVMH…FILV, CVIV…LIPF, LCTM…EIIV, LLGI…IPLM, VLYG…FSSI, and PIAL…DGLI.

Belongs to the NqrDE/RnfAE family. In terms of assembly, the complex is composed of six subunits: RnfA, RnfB, RnfC, RnfD, RnfE and RnfG.

The protein localises to the cell inner membrane. Part of a membrane-bound complex that couples electron transfer with translocation of ions across the membrane. The polypeptide is Ion-translocating oxidoreductase complex subunit A (Buchnera aphidicola subsp. Baizongia pistaciae (strain Bp)).